The following is a 1051-amino-acid chain: MEVAVEKAAAAAAPAGGPAAAAPSGENEAESRQGPDSESGGEASRLNLLDTCAVCHQNIQSRVPKLLPCLHSFCQRCLPAPQRYLMLTAPALGSAETPPPAPAPAPAPGSPAGGPSPFATQVGVIRCPVCSQECAERHIIDNFFVKDTTEVPSSTVEKSNQVCTSCEDNAEANGFCVECVEWLCKTCIRAHQRVKFTKDHTVRQKEEVSPEAVGVTSQRPVFCPFHKKEQLKLYCETCDKLTCRDCQLLEHKEHRYQFIEEAFQNQKVIIDTLITKLMEKTKYIKYTGNQIQNRIIEINQNQKQVEQDIKVAIFTLMVEINKKGKALLHQLESLAKDHRMKLMQQQQEVAGLSKQLEHVMHFSKWAVSSGSSTALLYSKRLITYRLRHLLRARCDASPVTNTTIQFHCDPSFWAQNIINLGSLVIEDKESQPQMPKQNPVVEQSSQPPGGLPSNQLSKFPTQISLAQLRLQHIQQQVMAQRQQVQRRPAPVGLPNPRMQGPIQQPSISHQHPPPRLINFQNHSPKPNGPVLPPYPQQLRYSPSQNVPRQTTIKPNPLQMAFLAQQAIKQWQISSVQAPPTTASSSSSTPSSPTITSAAGYDGKAFSSPMIDLSAPVGGSYNLPSLPDIDCSSTIMLDNIARKDTGVDHAQPRPPSNRTVQSPNSSVPSPGLAGPVTMTSVHPPIRSPSASSVGSRGSSGSSSKPAGADSTHKVPVVMLEPIRIKQENSGPPENYDFPVVIVKQESDEESRPQNTNYPRSILTSLLLNSSQSSASEETVLRSDAPDSTGDQPGLHQENSSNGKSEWSDASQKSPVHVGETRKEDDPNEDWCAVCQNGGELLCCEKCPKVFHLTCHVPTLTNFPSGEWICTFCRDLSKPEVDYDCDVPSHHSEKRKSEGLTKLTPIDKRKCERLLLFLYCHEMSLAFQDPVPLTVPDYYKIIKNPMDLSTIKKRLQEDYCMYTKPEDFVADFRLIFQNCAEFNEPDSEVANAGIKLESYFEELLKNLYPEKRFPKVEFRHEAEDCKFSDDSDDDFVQPRKKRLKSTEDRQLLK.

Positions 1 to 42 (MEVAVEKAAAAAAPAGGPAAAAPSGENEAESRQGPDSESGGE) are disordered. Lys-7 is covalently cross-linked (Glycyl lysine isopeptide (Lys-Gly) (interchain with G-Cter in SUMO2)). Residues 8-23 (AAAAAAPAGGPAAAAP) show a composition bias toward low complexity. The segment at 52 to 77 (CAVCHQNIQSRVPKLLPCLHSFCQRC) adopts an RING-type zinc-finger fold. Residues 94–115 (SAETPPPAPAPAPAPGSPAGGP) are disordered. Phosphothreonine is present on Thr-97. Over residues 97 to 109 (TPPPAPAPAPAPG) the composition is skewed to pro residues. Ser-110 carries the post-translational modification Phosphoserine. 2 consecutive B box-type zinc fingers follow at residues 158 to 211 (KSNQ…VSPE) and 218 to 259 (QRPV…YQFI). 4 residues coordinate Zn(2+): Cys-163, Cys-166, Cys-187, and His-200. Lys-205 participates in a covalent cross-link: Glycyl lysine isopeptide (Lys-Gly) (interchain with G-Cter in SUMO2). Zn(2+) is bound by residues Cys-223, His-226, Cys-246, and His-251. A Glycyl lysine isopeptide (Lys-Gly) (interchain with G-Cter in SUMO2) cross-link involves residue Lys-276. A coiled-coil region spans residues 289 to 359 (NQIQNRIIEI…AGLSKQLEHV (71 aa)). The tract at residues 429–457 (ESQPQMPKQNPVVEQSSQPPGGLPSNQLS) is disordered. Residues 431–457 (QPQMPKQNPVVEQSSQPPGGLPSNQLS) show a composition bias toward polar residues. Glycyl lysine isopeptide (Lys-Gly) (interchain with G-Cter in SUMO2) cross-links involve residues Lys-436 and Lys-458. Residue Arg-469 is modified to Omega-N-methylarginine. 2 stretches are compositionally biased toward low complexity: residues 479-490 (AQRQQVQRRPAP) and 501-510 (PIQQPSISHQ). The segment at 479 to 551 (AQRQQVQRRP…PSQNVPRQTT (73 aa)) is disordered. The span at 526-535 (PNGPVLPPYP) shows a compositional bias: pro residues. The segment covering 538-551 (LRYSPSQNVPRQTT) has biased composition (polar residues). Glycyl lysine isopeptide (Lys-Gly) (interchain with G-Cter in SUMO2) cross-links involve residues Lys-553 and Lys-642. Residues 644–713 (TGVDHAQPRP…PAGADSTHKV (70 aa)) are disordered. Residues Ser-655, Ser-661, and Ser-668 each carry the phosphoserine modification. Positions 655 to 667 (SNRTVQSPNSSVP) are enriched in polar residues. A compositionally biased stretch (low complexity) spans 686–708 (SPSASSVGSRGSSGSSSKPAGAD). Glycyl lysine isopeptide (Lys-Gly) (interchain with G-Cter in SUMO2) cross-links involve residues Lys-703 and Lys-712. Glycyl lysine isopeptide (Lys-Gly) (interchain with G-Cter in SUMO); alternate cross-links involve residues Lys-724 and Lys-742. A Glycyl lysine isopeptide (Lys-Gly) (interchain with G-Cter in SUMO1); alternate cross-link involves residue Lys-724. Residues Lys-724 and Lys-742 each participate in a glycyl lysine isopeptide (Lys-Gly) (interchain with G-Cter in SUMO2); alternate cross-link. Phosphoserine is present on residues Ser-745 and Ser-769. The segment at 755-780 (NYPRSILTSLLLNSSQSSASEETVLR) is nuclear receptor binding site (NRBS). The segment at 771–827 (SSASEETVLRSDAPDSTGDQPGLHQENSSNGKSEWSDASQKSPVHVGETRKEDDPNE) is disordered. Positions 795 to 812 (QENSSNGKSEWSDASQKS) are enriched in polar residues. Lys-802 participates in a covalent cross-link: Glycyl lysine isopeptide (Lys-Gly) (interchain with G-Cter in SUMO2). Position 809 is a phosphoserine (Ser-809). Lys-811 is covalently cross-linked (Glycyl lysine isopeptide (Lys-Gly) (interchain with G-Cter in SUMO2)). Ser-812 is subject to Phosphoserine. The residue at position 819 (Thr-819) is a Phosphothreonine. The PHD-type zinc finger occupies 827-874 (EDWCAVCQNGGELLCCEKCPKVFHLTCHVPTLTNFPSGEWICTFCRDL). An interaction with histone H3 that is not methylated at 'Lys-4' (H3K4me0) region spans residues 835 to 841 (NGGELLC). Lys-876 is covalently cross-linked (Glycyl lysine isopeptide (Lys-Gly) (interchain with G-Cter in SUMO2)). A Nuclear localization signal motif is present at residues 892–908 (KRKSEGLTKLTPIDKRK). Residues 900 to 1005 (KLTPIDKRKC…SYFEELLKNL (106 aa)) form the Bromo domain. Residues Lys-950 and Lys-993 each participate in a glycyl lysine isopeptide (Lys-Gly) (interchain with G-Cter in SUMO2) cross-link. A disordered region spans residues 1024-1051 (KFSDDSDDDFVQPRKKRLKSTEDRQLLK). Phosphoserine occurs at positions 1026 and 1029. Lys-1042 participates in a covalent cross-link: Glycyl lysine isopeptide (Lys-Gly) (interchain with G-Cter in SUMO2). Basic and acidic residues predominate over residues 1042–1051 (KSTEDRQLLK). Ser-1043 carries the phosphoserine modification.

In terms of assembly, interacts (via bromo domain) with histone H3 (via N-terminus), provided that it is not methylated at 'Lys-4' (H3K4me0). Does not interact with histone H3 that is methylated at 'Lys-4' (H3K4me1, H3K4me2 or H3K4me3). Interacts (via bromo domain) with histone H3 (via N-terminus) that is acetylated at 'Lys-23' (H3K23ac). Has the highest affinity for histone H3 that is both unmodified at 'Lys-4' (H3K4me0) and acetylated at 'Lys-23' (H3K23ac). Has very low affinity for histone H3 that is methylated at 'Lys-9' (H3K9me), or acetylated at both 'Lys-9' (H3K9ac) and 'Lys-14' (H3K14ac), or acetylated at 'Lys-27' (H3K27ac) (in vitro). Interacts with TRIM16. Interacts with NR3C2/MCR. Interacts with the ligand-binding domain of estrogen receptors (in vitro). Interaction with DNA-bound estrogen receptors requires the presence of estradiol. Interacts with AR, CARM1, KAT5/TIP60, NCOA2/GRIP1, BRD7, CBX1, CBX3 and CBX5. Part of a coactivator complex containing TRIM24, NCOA2/GRIP1 and CARM1. Interacts with p53/TP53 and PML. Post-translationally, sumoylated. In terms of processing, phosphorylated at Ser-768 by ATM kinase induces ubiquitination and degradation during DNA damage. Undergoes ubiquitination-mediated degradation in response to DNA damage. As to expression, detected in embryonic and adult liver. Detected in zygote and throughout embryogenesis (at protein level). Detected in all adult tissues, with the highest expression level in testis.

The protein localises to the nucleus. It is found in the cytoplasm. It catalyses the reaction S-ubiquitinyl-[E2 ubiquitin-conjugating enzyme]-L-cysteine + [acceptor protein]-L-lysine = [E2 ubiquitin-conjugating enzyme]-L-cysteine + N(6)-ubiquitinyl-[acceptor protein]-L-lysine.. It participates in protein modification; protein ubiquitination. Functionally, transcriptional coactivator that interacts with numerous nuclear receptors and coactivators and modulates the transcription of target genes. Interacts with chromatin depending on histone H3 modifications, having the highest affinity for histone H3 that is both unmodified at 'Lys-4' (H3K4me0) and acetylated at 'Lys-23' (H3K23ac). Has E3 protein-ubiquitin ligase activity. Promotes ubiquitination and proteasomal degradation of p53/TP53. Plays a role in the regulation of cell proliferation and apoptosis via its effects on p53/TP53 levels. Up-regulates ligand-dependent transcription activation by AR, GCR/NR3C1, thyroid hormone receptor (TR) and ESR1. Modulates transcription activation by retinoic acid (RA) receptors, such as RARA. Plays a role in regulating retinoic acid-dependent proliferation of hepatocytes. Required for normal transition from proliferating neonatal hepatocytes to quiescent adult hepatocytes. Its function is as follows. Transcriptional coactivator that interacts with numerous nuclear receptors and coactivators and modulates the transcription of target genes. Interacts with chromatin depending on histone H3 modifications, having the highest affinity for histone H3 that is both unmodified at 'Lys-4' (H3K4me0) and acetylated at 'Lys-23' (H3K23ac). Has E3 protein-ubiquitin ligase activity. During the DNA damage response, participates in an autoregulatory feedback loop with TP53. Early in response to DNA damage, ATM kinase phosphorylates TRIM24 leading to its ubiquitination and degradation. After sufficient DNA repair has occurred, TP53 activates TRIM24 transcription, ultimately leading to TRIM24-mediated TP53 ubiquitination and degradation. Plays a role in the regulation of cell proliferation and apoptosis, at least in part via its effects on p53/TP53 levels. Up-regulates ligand-dependent transcription activation by AR, GCR/NR3C1, thyroid hormone receptor (TR) and ESR1. Modulates transcription activation by retinoic acid (RA) receptors, including RARA. Plays a role in regulating retinoic acid-dependent proliferation of hepatocytes. Also participates in innate immunity by mediating the specific 'Lys-63'-linked ubiquitination of TRAF3 leading to activation of downstream signal transduction of the type I IFN pathway. Additionally, negatively regulates NLRP3/CASP1/IL-1beta-mediated pyroptosis and cell migration probably by ubiquitinating NLRP3. This Mus musculus (Mouse) protein is Transcription intermediary factor 1-alpha (Trim24).